The chain runs to 780 residues: Lethal(3)malignant brain tumor-like protein 3 (780 aa).

The tract at residues 1–64 (MTESASSTSG…VKKATATTTW (64 aa)) is interaction with RBPJ. Required for transcription repressor activity on Notch target genes. A disordered region spans residues 149-220 (DKDQKEERDV…RKRRGDSAVL (72 aa)). Acidic residues-rich tracts occupy residues 157-166 (DVEEDNEEED) and 185-194 (EDGEERDDEM). MBT repeat units lie at residues 232 to 332 (WCWA…LHPP), 340 to 439 (FNWQ…LITP), and 448 to 543 (FSWD…LQPP). The segment at 549–593 (LMEASEHGGCSTPGCKGIGHFKRARHLGPHSAANCPYSEINLNKD) adopts a CCHHC-type; degenerate zinc-finger fold. The disordered stretch occupies residues 597 to 665 (PDRLSGEMPP…GAREEPTVQQ (69 aa)). The segment at 600-710 (LSGEMPPASP…PASKVSKWST (111 aa)) is interaction with DCAF5. At serine 608 the chain carries Phosphoserine. Lysine 637 participates in a covalent cross-link: Glycyl lysine isopeptide (Lys-Gly) (interchain with G-Cter in SUMO2). Basic and acidic residues predominate over residues 643-661 (RTESEMRTSHEARGAREEP). Lysine 704 is covalently cross-linked (Glycyl lysine isopeptide (Lys-Gly) (interchain with G-Cter in SUMO2)). The SAM domain maps to 708–772 (WSTDEVSEFI…FNSILMFKAA (65 aa)).

Interacts with RNF2. Interacts (via SAM domain) with SAMD1 (via SAM domain); the interaction mediates L3MBTL3 binding to chromatin. Interacts with RBPJ; the interaction is required for L3MBTL3 localization to chromatin and is impaired by Notch-derived peptides containing the intracellular domain (NICD). Interacts (via SAM domain) with KDM1A. Interacts with DCAF5. Interacts with DNMT1. Interacts with E2F1. Interacts with SOX2. Interacts with SFMBT1.

The protein resides in the nucleus. Functionally, is a negative regulator of Notch target genes expression, required for RBPJ-mediated transcriptional repression. It recruits KDM1A to Notch-responsive elements and promotes KDM1A-mediated H3K4me demethylation. Involved in the regulation of ubiquitin-dependent degradation of a set of methylated non-histone proteins, including SOX2, DNMT1 and E2F1. It acts as an adapter recruiting the CRL4-DCAF5 E3 ubiquitin ligase complex to methylated target proteins. Required for normal maturation of myeloid progenitor cells. This chain is Lethal(3)malignant brain tumor-like protein 3, found in Homo sapiens (Human).